Consider the following 215-residue polypeptide: Adenylate kinase (215 aa).

Position 10–15 (10–15) interacts with ATP; sequence GAGKGT. An NMP region spans residues 30 to 59; that stretch reads STGDMLRAAIKAGTPLGLEAKKIIDEGGLV. AMP contacts are provided by residues Thr-31, Arg-36, 57–59, 85–88, and Gln-92; these read GLV and GFPR. Positions 122-159 are LID; sequence GRRVHLASGRTYHVTYNPPKVEGKDDVTGEDLIQRDDD. ATP is bound by residues Arg-123 and 132-133; that span reads TY. 2 residues coordinate AMP: Arg-156 and Arg-167. Residue Gln-200 participates in ATP binding.

The protein belongs to the adenylate kinase family. Monomer.

It is found in the cytoplasm. It carries out the reaction AMP + ATP = 2 ADP. Its pathway is purine metabolism; AMP biosynthesis via salvage pathway; AMP from ADP: step 1/1. Its function is as follows. Catalyzes the reversible transfer of the terminal phosphate group between ATP and AMP. Plays an important role in cellular energy homeostasis and in adenine nucleotide metabolism. The protein is Adenylate kinase of Neisseria meningitidis serogroup C (strain 053442).